A 447-amino-acid chain; its full sequence is BAG family molecular chaperone regulator 5 (447 aa).

5 BAG domains span residues 9 to 86 (SISR…EQNA), 95 to 167 (QNIF…EDCM), 182 to 260 (SVAK…DLEE), 275 to 350 (SILK…DLKE), and 365 to 442 (SHKA…DLKS).

In terms of assembly, binds to the ATPase domain of HSP/HSP70 chaperones. Binds PRKN. Interacts with HSPA8 and JPH2. Expressed in the heart.

Its function is as follows. Co-chaperone for HSP/HSP70 proteins. It functions as a nucleotide-exchange factor promoting the release of ADP from HSP70, thereby activating HSP70-mediated protein refolding. Has an essential role in maintaining proteostasis at junctional membrane complexes (JMC), where it may function as a scaffold between the HSPA8 chaperone and JMC proteins enabling correct, HSPA8-dependent JMC protein folding. Inhibits both auto-ubiquitination of PRKN and ubiquitination of target proteins by PRKN. The protein is BAG family molecular chaperone regulator 5 (BAG5) of Homo sapiens (Human).